The following is a 35-amino-acid chain: Cecropin (35 aa).

At Ile35 the chain carries Isoleucine amide.

Belongs to the cecropin family.

It localises to the secreted. Functionally, cecropins have lytic and antibacterial activity against several Gram-positive and Gram-negative bacteria. This is Cecropin from Bombyx mori (Silk moth).